Consider the following 276-residue polypeptide: MAKFKLSLVQFLVSPVKSDNLNRACKLIKEAAQKGAQIVALPECFNSPYGTTYFPEYAEKIPGESTELLSQVAKECGIYLIGGSIPEEDCGKLYNTCAVFGPDGTLLVKHRKIHLFDIDVPGKIRFQESETLSPGDSFSVFDTPYCKVGVGICYDIRFAELAQIYANKGCQLLVYPGAFNMTTGPAHWELLQRARALDNQVYVATASPARDEKASYVAWGHSTIVSPWGEVVAKAGSEETVLSAEIDLQYLAEIREQIPIRRQRRRDLYNVEEKRN.

One can recognise a CN hydrolase domain in the interval Phe4–Leu248. Glu43 acts as the Proton acceptor in catalysis. The Proton donor role is filled by Lys112. Cys153 functions as the Nucleophile in the catalytic mechanism.

It belongs to the carbon-nitrogen hydrolase superfamily. NIT1/NIT2 family. Homodimer.

The protein localises to the cytoplasm. It carries out the reaction 2-oxoglutaramate + H2O = 2-oxoglutarate + NH4(+). It catalyses the reaction 2-oxosuccinamate + H2O = oxaloacetate + NH4(+). Its function is as follows. Has omega-amidase activity. The role of omega-amidase is to remove potentially toxic intermediates by converting 2-oxoglutaramate and 2-oxosuccinamate to biologically useful 2-oxoglutarate and oxaloacetate, respectively. This Xenopus laevis (African clawed frog) protein is Omega-amidase NIT2-A (nit2a).